The following is a 549-amino-acid chain: O-fucosyltransferase 29 (549 aa).

A helical; Signal-anchor for type II membrane protein transmembrane segment spans residues 43–63 (TVMWTWVCGFMLFSLGVISLF). N-linked (GlcNAc...) asparagine glycosylation is present at Asn152. 292 to 294 (HLR) is a binding site for substrate. N-linked (GlcNAc...) asparagine glycans are attached at residues Asn359 and Asn527. Positions 506–549 (PFSYDKTSTDDEEEDMSEENHNSTSPGHVHLSSADNERDEVFPD) are disordered. Basic and acidic residues predominate over residues 540–549 (DNERDEVFPD).

The protein belongs to the glycosyltransferase GT106 family.

It is found in the membrane. It participates in glycan metabolism. This Arabidopsis thaliana (Mouse-ear cress) protein is O-fucosyltransferase 29.